Here is a 229-residue protein sequence, read N- to C-terminus: MKRKNIALIPAAGIGVRFGADKPKQYVEIGSKTVLEHVLGIFERHEAVDLTVVVVSPEDTFADKVQTAFPQVRVWKNGGQTRAETVRNGVAKLLETGLAAETDNILVHDAARCCLPSEALTRLIEQAGNAAEGGILAVPVADTLKRAESGQISATVDRSGLWQAQTPQLFQAGLLHRALAAENLDGITDEASAVEKLGVRPLLIQGDARNLKLTQPQDAYIVRLLLNAV.

The protein belongs to the IspD/TarI cytidylyltransferase family. IspD subfamily.

The catalysed reaction is 2-C-methyl-D-erythritol 4-phosphate + CTP + H(+) = 4-CDP-2-C-methyl-D-erythritol + diphosphate. The protein operates within isoprenoid biosynthesis; isopentenyl diphosphate biosynthesis via DXP pathway; isopentenyl diphosphate from 1-deoxy-D-xylulose 5-phosphate: step 2/6. In terms of biological role, catalyzes the formation of 4-diphosphocytidyl-2-C-methyl-D-erythritol from CTP and 2-C-methyl-D-erythritol 4-phosphate (MEP). The sequence is that of 2-C-methyl-D-erythritol 4-phosphate cytidylyltransferase from Neisseria gonorrhoeae (strain NCCP11945).